Reading from the N-terminus, the 90-residue chain is Acylphosphatase (90 aa).

Residues 3 to 90 (HYHAIITGRV…AHYQDFRIKG (88 aa)) form the Acylphosphatase-like domain. Residues R18 and N36 contribute to the active site.

This sequence belongs to the acylphosphatase family.

The enzyme catalyses an acyl phosphate + H2O = a carboxylate + phosphate + H(+). The protein is Acylphosphatase (acyP) of Bacillus pumilus (strain SAFR-032).